The sequence spans 422 residues: G-protein coupled receptor 83 (422 aa).

A signal peptide spans 1-16 (MGRRGALLCLLPLLRA). Over 17–70 (AERPEGRADEPGLEAALAGPNASHFFWSNYSFSDWQNFVGRRRYGAESQNPTVK) the chain is Extracellular. N-linked (GlcNAc...) asparagine glycosylation is found at Asn37 and Asn45. Residues 71–91 (ALLVVAYSFIIVFSLFGNVLV) traverse the membrane as a helical segment. Residues 92–106 (CHVIFKNQRMRSATS) lie on the Cytoplasmic side of the membrane. The chain crosses the membrane as a helical span at residues 107–128 (LFIVNLAVADILITLLNTPFTL). The Extracellular portion of the chain corresponds to 129–144 (VRFVNSTWVFGKGMCH). Asn133 is a glycosylation site (N-linked (GlcNAc...) asparagine). A helical transmembrane segment spans residues 145-166 (VSRFAQYCSLHVSALTLTAIAV). Residues 167–185 (DRHQVIMHPLKPRISITKG) are Cytoplasmic-facing. A helical membrane pass occupies residues 186-207 (VIYITVIWTMATFFSLPHAICQ). The Extracellular segment spans residues 208-237 (KLFTFKYSEDIVRSLCLPDFPEPADLFWKY). Residues 238 to 259 (LDLATFILLYILPLLIISVAYA) form a helical membrane-spanning segment. Residues 260 to 292 (RVAKKLWLCNTIGDVTTEQYLALRRKKKKTIKM) are Cytoplasmic-facing. The helical transmembrane segment at 293–314 (LMLVVVLFALCWFPLNCYVLLL) threads the bilayer. At 315–326 (SSKVIHTNNALY) the chain is on the extracellular side. The helical transmembrane segment at 327-347 (FAFHWFAMSSTCYNPFIYCWL) threads the bilayer. The Cytoplasmic segment spans residues 348 to 422 (NENFRIELKA…SSVEPIVAMS (75 aa)).

It belongs to the G-protein coupled receptor 1 family.

The protein resides in the cell membrane. G-protein coupled receptor for PEN, a neuropeptide produced from the precursor protein, proSAAS (encoded by PCSK1N). Acts through a G(i)- and G(q)-alpha-alpha-mediated pathway in response to PEN. Plays a role in food intake and body weight regulation. May contribute to the regulation of anxiety-related behaviors. The polypeptide is G-protein coupled receptor 83 (GPR83) (Canis lupus familiaris (Dog)).